The sequence spans 193 residues: Ion-translocating oxidoreductase complex subunit A (193 aa).

Helical transmembrane passes span 5–25 (LLLF…FLGL), 47–67 (FVMT…LIPL), 72–92 (LRTL…EMVV), 102–122 (LLGI…VALL), 134–154 (ALYG…FAAI), and 171–191 (AIAL…SGLV).

This sequence belongs to the NqrDE/RnfAE family. As to quaternary structure, the complex is composed of six subunits: RnfA, RnfB, RnfC, RnfD, RnfE and RnfG.

Its subcellular location is the cell inner membrane. Part of a membrane-bound complex that couples electron transfer with translocation of ions across the membrane. This is Ion-translocating oxidoreductase complex subunit A from Citrobacter koseri (strain ATCC BAA-895 / CDC 4225-83 / SGSC4696).